The following is an 809-amino-acid chain: Integrin beta pat-3 (809 aa).

An N-terminal signal peptide occupies residues 1 to 19; sequence MPPSTSLLLLAALLPFALP. Topologically, residues 20–737 are extracellular; that stretch reads ASDWKTGEVT…KHKDCPPPVP (718 aa). Residues Asn47, Asn141, Asn269, Asn373, and Asn400 are each glycosylated (N-linked (GlcNAc...) asparagine). The VWFA domain maps to 153–352; the sequence is DLYYLMDLSY…IFAVTKNNQD (200 aa). 15 disulfide bridges follow: Cys476–Cys496, Cys489–Cys499, Cys501–Cys510, Cys512–Cys543, Cys526–Cys541, Cys535–Cys546, Cys548–Cys563, Cys565–Cys586, Cys570–Cys584, Cys578–Cys589, Cys591–Cys600, Cys602–Cys625, Cys609–Cys623, Cys617–Cys628, and Cys630–Cys644. 4 consecutive I-EGF domains span residues 476–511, 512–564, 565–601, and 602–645; these read CERQ…KYCE, CNRP…EFCE, CDNF…RACE, and CPIS…AKCE. Asn530 carries an N-linked (GlcNAc...) asparagine glycan. N-linked (GlcNAc...) asparagine glycans are attached at residues Asn672, Asn693, and Asn721. A helical transmembrane segment spans residues 738–758; the sequence is VLAIVLGVIAGIVILGILLLL. Residues 759–809 are Cytoplasmic-facing; the sequence is LWKLLTVLHDRSEYATFNNERLMAKWDTNENPIYKQATTTFKNPVYAGKAN. Position 792 is a phosphotyrosine (Tyr792).

Belongs to the integrin beta chain family. Heterodimer of an alpha and a beta subunit. Interacts with alpha subunit ina-1. Interacts with alpha subunit pat-2. Component of an integrin containing attachment complex, composed of at least pat-2, pat-3, pat-4, pat-6, unc-52, unc-97 and unc-112. May interact with tns-1 (via C-terminus). In terms of processing, phosphorylated. Dephosphorylated by dep-1. In terms of tissue distribution, expressed in body wall muscles (at protein level). Expressed in gonadal sheath cells and spermatheca. Expressed in vulval cells and along the basal laminae that separate the vulval cells from the uterus (at the protein level).

Its subcellular location is the cell membrane. It is found in the lateral cell membrane. It localises to the basolateral cell membrane. The protein resides in the cytoplasm. The protein localises to the myofibril. Its subcellular location is the sarcomere. It is found in the m line. It localises to the cell junction. The protein resides in the focal adhesion. In terms of biological role, integrin alpha ina-1/beta pat-3 is a receptor for laminin. Integrin alpha pat-2/beta pat-3 recognizes the sequence R-G-D in its ligands. Plays a role in cell migration, morphogenesis and probably in cell-cell interactions. During gonad morphogenesis, involved in distal tip cell (DTC)-mediated guidance of gonad elongation, in maintaining their sharp tapering morphology and in their migration. Component of an integrin containing attachment complex, which is required for muscle development and maintenance. Involved in the assembly of dense bodies and M lines during body wall muscle embryonic development by recruiting one of their components, cpna-1, to integrin-mediated attachment sites. May play a similar role in the assembly of dense bodies in gonadal myoepithelial sheath cells. Probably by acting as a receptor for apoptotic cells, plays a role in the clearance of apoptotic cells during mid-embryogenesis. Required for ovulation. Dephosphorylated, probably within the alpha pat-2/beta pat-3 integrin receptor complex, by the phosphatase dep-1, which leads to down-stream effects including the negative regulation of let-23 signaling and vulval induction. When unphosphosphorylated, recruits the cytoplasmic adapter protein tln-1 to the plasma membrane of secondary vulval precursor cells. This promotes the linking of focal adhesion sites to the F-actin cytoskeleton, and it also acts to restrict the mobility of the let-23 receptor on the plasma membrane of vulval cells which thereby attenuates let-23 signaling. Plays a role in axon regeneration after injury. This Caenorhabditis elegans protein is Integrin beta pat-3.